Reading from the N-terminus, the 1434-residue chain is MEPANLSNLRGSSLRGSTRGSLRANSNSIWRNNGVEIFSRSSRDEDDEEALKWAALEKLPTFDRLRKGLLFGSQGAAAEVDINDLGFQERKNLLERLVKVADEDNEKFLLKLKNRIDRVGIDLPTIEVRYEHLNIDADAYVGSRSLPTFMNFMTNFVETLLNSLHILSSRKRQLTILKDISGIIKPCRMTLLLGPPSSGKTTLLLALAGKLDPALKVTGKVSYNGHELHEFVPQRTAAYISQHDLHIGEMTVRETLEFSARCQGVGSRFEMLAELSRREKAANIKPDADIDIYMKAAATEGQEANVVTDYVLKILGLDICADTMVGDDMIRGISGGQKKRVTTGEMLVGPSKALFMDEISTGLDSSTTYSIVNSLRQSVQILKGTAVISLLQPAPETYNLFDDIILLSDGYIVYQGPRDDVLEFFESMGFKCPQRKGVADFLQEVTSKKDQQQYWSKRNEPYRFITSKEFAEAYQSFHVGRKLGDELATPFDKTKCHPAALTNEKYGIGKKELLKVCTERELLLMKRNSFVYMFKFSQLTIMALITMTLFFRTEMPRDTTDDGGIYAGALFFVVIMIMFNGMSELAMTIFKLPVFYKQRDLLFFPSWAYAIPSWILKIPVTLVEVGLWVILTYYVIGFDPNITRFLKQFLLLIVVNQMASGMFRFIGAVGRTMGVASTFGSFALLLQFALGGFVLSRDDVKSWWIWGYWISPMMYSVNSILVNEFDGKKWNHIVPGGNETLGSTVVKSRGFFPEAYWYWIGVGALVGFTVVFNFCYSLALAYLNPFDKPQAVLPEDGENAENGEVSSQITSTDGGDSISESQNNKKGMVLPFEPHSITFDDVVYSVDMPQEMKEQGAGEDRLVLLKGVSGAFRPGVLTALMGVSGAGKTTLMDVLAGRKTGGYIDGEIKISGYPKKQETFARISGYCEQNDIHSPYVTVYESLVYSAWLRLPQDVDEKTRKMFVDEVMELVELGPLRSALVGLPGVNGLSTEQRKRLTIAVELVANPSIIFMDEPTSGLDARAAAIVMRTVRNTVDTGRTVVCTIHQPSIDIFEAFDELFLMKRGGQEIYVGPLGRHSCHLIKYFESNPGVAKIKEGYNPATWMLEVTASAQEMMLGIDFTEVYKNSDLYRRNKALISELGVPRPGSKDLHFETQYSQSFWTQCVACLWKQHWSYWRNPAYTAVRFIFTTFIALIFGTMFWDLGTKVSKSQDLLNAMGSMYAAVLFLGVQNASSVQPVVAIERTVFYRERAAGMYSAIPYAFGQVSIEIPYIFVQSVFYGIIVYAMIGFEWDVGKFFWYLFIMFFTLLYFTFYGMMGVAVTPNQNVASIVAAFFYGVWNLFSGFIIPRPRMPVWWRWYYWANPVAWTLYGLVASQFGDIQTKLSDNETVEQFLRRYFGFKHDFLGVVAAVLTAYVFMFAFTFAFAIKAFNFQRR.

Residues 1 to 22 (MEPANLSNLRGSSLRGSTRGSL) form a disordered region. One can recognise an ABC transporter 1 domain in the interval 161–434 (LNSLHILSSR…FESMGFKCPQ (274 aa)). 194–201 (GPPSSGKT) serves as a coordination point for ATP. Residues 512–725 (ELLKVCTERE…SVNSILVNEF (214 aa)) enclose the ABC transmembrane type-2 1 domain. A run of 7 helical transmembrane segments spans residues 530–550 (FVYM…MTLF), 563–583 (GGIY…NGMS), 618–638 (IPVT…VIGF), 649–669 (FLLL…IGAV), 675–695 (VAST…GFVL), 702–722 (SWWI…SILV), and 760–780 (IGVG…SLAL). The segment at 793 to 824 (LPEDGENAENGEVSSQITSTDGGDSISESQNN) is disordered. Polar residues predominate over residues 804 to 824 (EVSSQITSTDGGDSISESQNN). An ABC transporter 2 domain is found at 837–1089 (ITFDDVVYSV…HLIKYFESNP (253 aa)). Residue 882 to 889 (GVSGAGKT) participates in ATP binding. An ABC transmembrane type-2 2 domain is found at 1162–1376 (TQCVACLWKQ…TLYGLVASQF (215 aa)). A run of 7 helical transmembrane segments spans residues 1181 to 1201 (YTAV…TMFW), 1221 to 1241 (YAAV…VVAI), 1269 to 1289 (IPYI…MIGF), 1296 to 1316 (FFWY…YGMM), 1326 to 1346 (VASI…GFII), 1357 to 1377 (WYYW…SQFG), and 1406 to 1426 (VVAA…AFAI).

It belongs to the ABC transporter superfamily. ABCG family. PDR (TC 3.A.1.205) subfamily.

The protein resides in the membrane. Functionally, may be a general defense protein. This chain is Pleiotropic drug resistance protein 1 (PDR1), found in Nicotiana tabacum (Common tobacco).